Here is a 277-residue protein sequence, read N- to C-terminus: 2-dehydro-3-deoxyphosphooctonate aldolase (277 aa).

It belongs to the KdsA family.

It is found in the cytoplasm. The enzyme catalyses D-arabinose 5-phosphate + phosphoenolpyruvate + H2O = 3-deoxy-alpha-D-manno-2-octulosonate-8-phosphate + phosphate. Its pathway is carbohydrate biosynthesis; 3-deoxy-D-manno-octulosonate biosynthesis; 3-deoxy-D-manno-octulosonate from D-ribulose 5-phosphate: step 2/3. It participates in bacterial outer membrane biogenesis; lipopolysaccharide biosynthesis. This chain is 2-dehydro-3-deoxyphosphooctonate aldolase, found in Vesicomyosocius okutanii subsp. Calyptogena okutanii (strain HA).